A 130-amino-acid polypeptide reads, in one-letter code: Iron-sulfur cluster insertion protein ErpA (130 aa).

The iron-sulfur cluster site is built by Cys-46, Cys-116, and Cys-118.

It belongs to the HesB/IscA family. As to quaternary structure, homodimer. Iron-sulfur cluster serves as cofactor.

Required for insertion of 4Fe-4S clusters for at least IspG. This chain is Iron-sulfur cluster insertion protein ErpA, found in Legionella pneumophila (strain Paris).